A 438-amino-acid polypeptide reads, in one-letter code: AP-2 complex subunit mu (438 aa).

Positions 177 to 437 (KNEVFLDIVE…ITKAGSYEIR (261 aa)) constitute an MHD domain.

It belongs to the adaptor complexes medium subunit family. Adaptor protein complex 2 (AP-2) is a heterotetramer composed of two large adaptins (alpha-type and beta-type subunits), a medium adaptin (mu-type subunit) and a small adaptin (sigma-type subunit).

Its subcellular location is the cell membrane. The protein localises to the membrane. It localises to the coated pit. It is found in the golgi apparatus. The protein resides in the trans-Golgi network membrane. Its function is as follows. Subunit of the adaptor protein complex 2 (AP-2). Adaptor protein complexes function in protein transport via transport vesicles in different membrane traffic pathways. Adaptor protein complexes are vesicle coat components and appear to be involved in cargo selection and vesicle formation. AP-2 is involved in clathrin-dependent endocytosis in which cargo proteins are incorporated into vesicles surrounded by clathrin (clathrin-coated vesicles, CCVs) which are destined for fusion with the early endosome. AP-2 recognizes Y-X-X-Phi endocytosis signal motif within the cytosolic tails of transmembrane cargo molecules. The complex binds polyphosphoinositides. In Arabidopsis thaliana (Mouse-ear cress), this protein is AP-2 complex subunit mu (AP2M).